Consider the following 62-residue polypeptide: Large ribosomal subunit protein uL29 (62 aa).

It belongs to the universal ribosomal protein uL29 family.

In Oleidesulfovibrio alaskensis (strain ATCC BAA-1058 / DSM 17464 / G20) (Desulfovibrio alaskensis), this protein is Large ribosomal subunit protein uL29.